We begin with the raw amino-acid sequence, 273 residues long: Dermonecrotic toxin LsaSicTox-alphaIB1bii (273 aa).

The active site involves His5. The Mg(2+) site is built by Glu25 and Asp27. The Nucleophile role is filled by His41. 2 disulfides stabilise this stretch: Cys45–Cys51 and Cys47–Cys190. Asp85 contacts Mg(2+).

It belongs to the arthropod phospholipase D family. Class II subfamily. It depends on Mg(2+) as a cofactor. As to expression, expressed by the venom gland.

It is found in the secreted. The enzyme catalyses an N-(acyl)-sphingosylphosphocholine = an N-(acyl)-sphingosyl-1,3-cyclic phosphate + choline. It catalyses the reaction an N-(acyl)-sphingosylphosphoethanolamine = an N-(acyl)-sphingosyl-1,3-cyclic phosphate + ethanolamine. It carries out the reaction a 1-acyl-sn-glycero-3-phosphocholine = a 1-acyl-sn-glycero-2,3-cyclic phosphate + choline. The catalysed reaction is a 1-acyl-sn-glycero-3-phosphoethanolamine = a 1-acyl-sn-glycero-2,3-cyclic phosphate + ethanolamine. In terms of biological role, dermonecrotic toxins cleave the phosphodiester linkage between the phosphate and headgroup of certain phospholipids (sphingolipid and lysolipid substrates), forming an alcohol (often choline) and a cyclic phosphate. This toxin acts on sphingomyelin (SM). It may also act on ceramide phosphoethanolamine (CPE), lysophosphatidylcholine (LPC) and lysophosphatidylethanolamine (LPE), but not on lysophosphatidylserine (LPS), and lysophosphatidylglycerol (LPG). It acts by transphosphatidylation, releasing exclusively cyclic phosphate products as second products. Induces dermonecrosis, hemolysis, increased vascular permeability, edema, inflammatory response, and platelet aggregation. The sequence is that of Dermonecrotic toxin LsaSicTox-alphaIB1bii from Loxosceles sabina (Tucson recluse spider).